Here is a 146-residue protein sequence, read N- to C-terminus: Hemoglobin subunit delta (146 aa).

In terms of domain architecture, Globin spans 2–146 (HLTGEEKSAV…VATALAHKYH (145 aa)). Heme b is bound by residues histidine 63 and histidine 92.

It belongs to the globin family. In terms of assembly, heterotetramer of two delta chains and two alpha chains. In terms of tissue distribution, red blood cells.

This Ateles fusciceps (Brown-headed spider monkey) protein is Hemoglobin subunit delta (HBD).